The primary structure comprises 545 residues: CTP synthase (545 aa).

Residues 1–266 (MTTRYIFVTG…DELVTKRFGI (266 aa)) form an amidoligase domain region. Residue Ser-14 participates in CTP binding. Ser-14 contacts UTP. ATP-binding positions include 15 to 20 (SLGKGI) and Asp-72. Mg(2+) is bound by residues Asp-72 and Glu-140. CTP-binding positions include 147–149 (DIE), 187–192 (KTKPTQ), and Lys-223. Residues 187–192 (KTKPTQ) and Lys-223 contribute to the UTP site. An ATP-binding site is contributed by 239 to 241 (KDV). The Glutamine amidotransferase type-1 domain occupies 291-542 (TIGMVGKYIE…VAAAAAHQKR (252 aa)). Position 352 (Gly-352) interacts with L-glutamine. Cys-379 functions as the Nucleophile; for glutamine hydrolysis in the catalytic mechanism. L-glutamine-binding positions include 380–383 (LGMQ), Glu-403, and Arg-470. Catalysis depends on residues His-515 and Glu-517.

This sequence belongs to the CTP synthase family. In terms of assembly, homotetramer.

The catalysed reaction is UTP + L-glutamine + ATP + H2O = CTP + L-glutamate + ADP + phosphate + 2 H(+). The enzyme catalyses L-glutamine + H2O = L-glutamate + NH4(+). It catalyses the reaction UTP + NH4(+) + ATP = CTP + ADP + phosphate + 2 H(+). It participates in pyrimidine metabolism; CTP biosynthesis via de novo pathway; CTP from UDP: step 2/2. Allosterically activated by GTP, when glutamine is the substrate; GTP has no effect on the reaction when ammonia is the substrate. The allosteric effector GTP functions by stabilizing the protein conformation that binds the tetrahedral intermediate(s) formed during glutamine hydrolysis. Inhibited by the product CTP, via allosteric rather than competitive inhibition. Its function is as follows. Catalyzes the ATP-dependent amination of UTP to CTP with either L-glutamine or ammonia as the source of nitrogen. Regulates intracellular CTP levels through interactions with the four ribonucleotide triphosphates. This chain is CTP synthase, found in Shewanella woodyi (strain ATCC 51908 / MS32).